The chain runs to 1495 residues: ABC transporter C family member 12 (1495 aa).

Helical transmembrane passes span 38 to 58 (VMLVSHFVLLGLCFYRIWIIF), 76 to 96 (VLGLLACYCVVEPVLRLVMGI), 110 to 130 (FEVASLMVEAFAWFSMLVLIG), 146 to 166 (FGVLYVLVADAVLLDLVLPLK), 173 to 195 (ALYLFISSRCSQALFGILLLIYI), 303 to 323 (FWLAGIFKIGNDLSQFVGPVI), 337 to 357 (AWVGYVYAFIIFVGVTLGVLC), 420 to 440 (GLWSAPFRIIVSMILLYQQLG), 441 to 461 (VASLFGSLILFLLIPLQTLII), 528 to 548 (FILNSIPVVVTVVSFGVFVLL), and 558 to 578 (FTSLSLFAVLRFPLNMLPNLL). In terms of domain architecture, ABC transmembrane type-1 1 spans 303–583 (FWLAGIFKIG…LPNLLSQVVN (281 aa)). The ABC transporter 1 domain occupies 615-839 (ISIKNGYFSW…GILFKKLMEN (225 aa)). 650–657 (GGTGEGKT) serves as a coordination point for ATP. 5 helical membrane-spanning segments follow: residues 907–927 (AVGGLWVVMILLACYLATEVL), 949–969 (PGFYIVVYALLGFGQVAVTFT), 1042–1062 (FALIGTVSTISLWAIMPLLIL), 1140–1160 (LETLGGVMIWLTATFAVLQNG), and 1166–1186 (AGFASTMGLLLSYTLNITSLL). The ABC transmembrane type-1 2 domain occupies 914–1198 (VMILLACYLA…VLRQASRAEN (285 aa)). An ABC transporter 2 domain is found at 1235 to 1469 (IKFEDVHLRY…DTSAFFRMVH (235 aa)). 1269 to 1276 (GRTGAGKS) lines the ATP pocket.

Belongs to the ABC transporter superfamily. ABCC family. Conjugate transporter (TC 3.A.1.208) subfamily. As to expression, ubiquitous.

It is found in the membrane. It catalyses the reaction ATP + H2O + xenobioticSide 1 = ADP + phosphate + xenobioticSide 2.. Functionally, pump for glutathione S-conjugates. In Arabidopsis thaliana (Mouse-ear cress), this protein is ABC transporter C family member 12 (ABCC12).